A 698-amino-acid polypeptide reads, in one-letter code: MVDKNRTLHELSSKNFSRTPNGLIFTNDLKTVYSIFLICLDLKEKKHSSDTKSFLLTAFTKHFHFTFTYQEAIKAMGQLELKVDMNTTCINVSYNIKPSLARHLLTLFMSSKLLHTPQDRTRGEPKEKVLFQPTPKGVAVLQKYVRDIGLKTMPDILLSSFNSMKLFTFERSSVTDSIIHSDYLIHILFIKMMGAKPNVWSPTNADDPLPCLSSLLEYTNNDDTFTFEKSKPEQGWQAQIGNIDINDLERVSPLAHRFFTNPDSESHTQYYVSNAGIRLFENKTFGTSKKIVIKYTFTTKAIWQWIMDCTDIMHVKEAVSLAALFLKTGLIVPVLLQPSRTDKKKFQISRSSFFTLSKRGWDLVSWTGCKSNNIRAPNGSTIDLDFTLRGHMTVRDEKKTLDDSEGFSQDMLISSSNLNKLDYVLTDPGMRYLFRRHLEKELCVENLDVFIEIKRFLKKMTILKKLIDSKHCDKKSNTSTSKNNIVKTIDSALMKQANECLEMAYHIYSSYIMIGSPYQLNIHHNLRQNISDIMLHPHSPLSEHFPTNLYDPSPASAESAASSISSTEADTLGEPPEVSLKPSKNLSNENCSFKKQGFKHQLKEYKPAPLTLAETHSPNASVENSHTIVRYGMDNTQNDTKSVESFPATLKVLRKLYPLFEIVSNEMYRLMNNDSFQKFTQSDVYKDASALIEIQEKC.

The segment at 10 to 203 is fungal-DR; it reads ELSSKNFSRT…GAKPNVWSPT (194 aa). Serine 252 bears the Phosphoserine mark. Positions 273 to 358 constitute a DEP domain; it reads SNAGIRLFEN…SRSSFFTLSK (86 aa). Serine 408 bears the Phosphoserine mark. An RGS domain is found at 420–689; the sequence is KLDYVLTDPG…TQSDVYKDAS (270 aa). The residue at position 539 (serine 539) is a Phosphoserine; by MAPK. Residues 545-586 form a disordered region; the sequence is FPTNLYDPSPASAESAASSISSTEADTLGEPPEVSLKPSKNL. The segment covering 551 to 570 has biased composition (low complexity); the sequence is DPSPASAESAASSISSTEAD. Serine 587 bears the Phosphoserine mark.

Phosphorylated by FUS3 and KSS1.

In terms of biological role, desensitization to alpha-factor pheromone. Is involved in regulating the signaling pathway for responding to mating pheromone. The protein is Protein SST2 (SST2) of Saccharomyces cerevisiae (strain ATCC 204508 / S288c) (Baker's yeast).